The following is a 2551-amino-acid chain: Piezo-type mechanosensitive ion channel component (2551 aa).

Helical transmembrane passes span 5–25 (YACMVLQRIVVPAVLVLAALM), 27–47 (PVGISFVYLLMFFVSPFVPLA), 56–76 (VTAFFIILLTLSTLVLLGHIT), 106–126 (FIDLQPFAIIEWLVPEVLVFA), 204–226 (IHFEGLVKISPLFCLATLFFAAV), 231–250 (VPGGFYFLIFLLSGTYWATC), 256–276 (GFALLLRCVMVVLVLHSLSIV), and 320–340 (LSLDSYLNPFALFFAYFALAL). Residues 354–375 (STRKARTPQPLESGSSVAPSVT) form a disordered region. Residues 363–375 (PLESGSSVAPSVT) are compositionally biased toward polar residues. Helical transmembrane passes span 395–415 (TTTSILDQISYGFVSVGGFIY), 424–444 (ILMMAWSIVYHSWLTFVLLLS), 463–483 (PFIVLYAEALLIAQYIYGMDL), 516–536 (VPLIVKTAFVLMFWVTSRQFF), 548–568 (LADFIAPLQITVGSAGSSYLI), 588–608 (LLVRLWIWLLVLVIFLCAITG), 611–631 (MTGFRICYMALFLFFLLVFQS), 639–659 (IMYGFWLFLIFYAMSILILIY), and 695–715 (FLHLVSPTIIVILTVIQVHYF). Positions 731-741 (GSAQQKPTETT) are enriched in polar residues. Residues 731–772 (GSAQQKPTETTALEPAPSKRRGSAGSLRKSQGPSAEAAPGAT) form a disordered region. Transmembrane regions (helical) follow at residues 819–839 (IAAFVCSVSEVCVLHIIFVGF), 857–877 (LISFIVTVIVLSKMIYQIEYL), 910–930 (LMSLLRTYIIYMVIVTMHAVI), 973–993 (LNFGFYKFGIEISLIALVSTI), 994–1014 (TYRQDIVAVVYALWLVVLLLL), 1022–1042 (IWGVFQAFFAISILTQYIVLV), 1071–1091 (GALHFNHVPKLIFDFIVLVIL), 1152–1172 (VLCGFYWFTLAVVFLAGTNIA), 1174–1194 (LLALGYLIGAFIFLWQGSDFY), 1198–1218 (IHTIIFRWKWLLAFNVANILI), 1239–1259 (WLVHMLGITCTSNVLTEQIML), and 1275–1295 (ITHQVVLLWDTICFAFIIFQL). 2 disordered regions span residues 1426 to 1521 (NITE…AKDS) and 1592 to 1658 (ESDE…PQQQ). Over residues 1430–1448 (SEMKMQRRKTLYDKSKDAP) the composition is skewed to basic and acidic residues. Low complexity predominate over residues 1466–1477 (ATASSSASPAPT). Over residues 1497–1511 (QTSKETSDSKSKMEV) the composition is skewed to basic and acidic residues. Low complexity-rich tracts occupy residues 1621-1634 (PTSTTLNTNTTTTP) and 1644-1658 (LQPLQPNTTSTPQQQ). A run of 4 helical transmembrane segments spans residues 1718–1738 (ISSWYALLANTDLICYIVVFI), 1741–1761 (VVNASLISLPLPIMVFLWGTL), 1770–1790 (FWVTLIAYTQAIVLIKCIFQF), and 1817–1837 (AHYAIYDLILLLVLFLHRYLL). Positions 1854 to 1876 (FTKPTASIDERDDSDNLSQPDSR) are disordered. 7 helical membrane passes run 1937–1957 (ALMFLCDFVNFFVLLFGFTAF), 1979–1999 (IPFLIMLLVQFLLIVIDRALY), 2008–2028 (IIFHFFSVIGIHIWMFFVVPA), 2033–2053 (TFNSLAPPIIFYVIKCFYMLL), 2075–2095 (FSMVNMIAFKVYMQIPFLYEL), 2151–2171 (IMGGTIVLLIVICIWGPLCLF), and 2431–2451 (TFSFLTAGGIIGLYTTFVLLA). Residues 2522–2551 (EYVDDDGDTDSIPSRMSVRRPEQLQPQQPQ) are disordered.

The protein belongs to the PIEZO (TC 1.A.75) family.

It is found in the cell membrane. Its function is as follows. Component of a mechanosensitive channel required for rapidly adapting mechanically activated (MA) currents. Plays a major role in nociception (response to strong or painful touch). Required for maintaining the mechanosensitivity of tarsal bristle mechanosensors. During their evalulation of potential egg-laying sites, females determine the softest substrate for their eggs first by making a coarse evaluation of substrate hardness using mechanosensitive channels nan and Piezo in the leg tarsal bristles, followed by a much finer assessment using nan, iav and Tmc mechanosensitive channels on the labellum. Acts in the nompC- and nan-expressing neurons of the female leg tarsals, to sense the mild differences in egg-laying substrate stiffness. The protein is Piezo-type mechanosensitive ion channel component of Drosophila melanogaster (Fruit fly).